We begin with the raw amino-acid sequence, 168 residues long: Disulfide bond formation protein B 2 (168 aa).

At 1–14 (MSAPIGATRAERWT) the chain is on the cytoplasmic side. The helical transmembrane segment at 15–31 (LLAIGVASFELVAGALW) threads the bilayer. Residues 32–49 (IQLAWQEDPCPLCIIQRY) are Periplasmic-facing. Cys41 and Cys44 form a disulfide bridge. The helical transmembrane segment at 50–64 (LFLLIALFTFVAAAG) threads the bilayer. Topologically, residues 65 to 69 (GRRVA) are cytoplasmic. The helical transmembrane segment at 70–87 (LLRVLSLTTALAGAAVAV) threads the bilayer. Residues 88–142 (RHIYVQAHPGFSCGFDALQPVIDSLPPAHWLPPVFKVGGLCETLYPPILGLSLPM) are Periplasmic-facing. Cys100 and Cys128 are disulfide-bonded. Residues 143–161 (WALVGFSAIAVALGWRIRA) form a helical membrane-spanning segment. Over 162–168 (QAVIRTA) the chain is Cytoplasmic.

Belongs to the DsbB family.

The protein localises to the cell inner membrane. In terms of biological role, required for disulfide bond formation in some periplasmic proteins. Acts by oxidizing the DsbA protein. The chain is Disulfide bond formation protein B 2 from Burkholderia lata (strain ATCC 17760 / DSM 23089 / LMG 22485 / NCIMB 9086 / R18194 / 383).